Consider the following 394-residue polypeptide: Elongation factor Tu (394 aa).

One can recognise a tr-type G domain in the interval 10–204 (KPHINVGTIG…SLDKYIPIPV (195 aa)). The segment at 19 to 26 (GHVDHGKT) is G1. 19 to 26 (GHVDHGKT) provides a ligand contact to GTP. Thr-26 is a binding site for Mg(2+). Residues 60–64 (GITIN) form a G2 region. The segment at 81-84 (DCPG) is G3. Residues 81-85 (DCPGH) and 136-139 (NKCD) contribute to the GTP site. The G4 stretch occupies residues 136-139 (NKCD). Residues 174–176 (SAL) form a G5 region.

The protein belongs to the TRAFAC class translation factor GTPase superfamily. Classic translation factor GTPase family. EF-Tu/EF-1A subfamily. As to quaternary structure, monomer.

Its subcellular location is the cytoplasm. The enzyme catalyses GTP + H2O = GDP + phosphate + H(+). Its function is as follows. GTP hydrolase that promotes the GTP-dependent binding of aminoacyl-tRNA to the A-site of ribosomes during protein biosynthesis. The sequence is that of Elongation factor Tu from Buchnera aphidicola subsp. Cinara cedri (strain Cc).